The primary structure comprises 123 residues: Small ribosomal subunit protein uS12 (123 aa).

Residues 1–28 (MPTIQQLIRTERSKVQKKTKSPALKQCP) are disordered. Asp-89 carries the post-translational modification 3-methylthioaspartic acid. Positions 104–123 (ATGVKDRKQGRSKYGTKRPK) are disordered. A compositionally biased stretch (basic residues) spans 113–123 (GRSKYGTKRPK).

Belongs to the universal ribosomal protein uS12 family. As to quaternary structure, part of the 30S ribosomal subunit. Contacts proteins S8 and S17. May interact with IF1 in the 30S initiation complex.

Functionally, with S4 and S5 plays an important role in translational accuracy. Interacts with and stabilizes bases of the 16S rRNA that are involved in tRNA selection in the A site and with the mRNA backbone. Located at the interface of the 30S and 50S subunits, it traverses the body of the 30S subunit contacting proteins on the other side and probably holding the rRNA structure together. The combined cluster of proteins S8, S12 and S17 appears to hold together the shoulder and platform of the 30S subunit. This chain is Small ribosomal subunit protein uS12, found in Gloeothece citriformis (strain PCC 7424) (Cyanothece sp. (strain PCC 7424)).